A 217-amino-acid polypeptide reads, in one-letter code: Dihydroflavonol 4-reductase (217 aa).

Lys-27 and Tyr-146 together coordinate NADP(+).

This sequence belongs to the NAD(P)-dependent epimerase/dehydratase family. Dihydroflavonol-4-reductase subfamily.

It carries out the reaction a (2R,3S,4S)-leucoanthocyanidin + NADP(+) = a (2R,3R)-dihydroflavonol + NADPH + H(+). The catalysed reaction is (2S)-flavan-4-ol + NADP(+) = (2S)-flavanone + NADPH + H(+). It functions in the pathway pigment biosynthesis; anthocyanin biosynthesis. Functionally, bifunctional enzyme involved in flavonoid metabolism. This chain is Dihydroflavonol 4-reductase (DFR1), found in Medicago sativa (Alfalfa).